Consider the following 339-residue polypeptide: Protein RETICULATA-RELATED 2, chloroplastic (339 aa).

The transit peptide at 1 to 58 (MAAMAAKLHISTKSDQSNVRLPRLINLSRDPTARVLFPRNGSVSSLHTNFSSPNIMVP) directs the protein to the chloroplast. Over residues 68 to 86 (IGNHGGGSGSGGGGGGYGG) the composition is skewed to gly residues. A disordered region spans residues 68–92 (IGNHGGGSGSGGGGGGYGGSEEEES). Helical transmembrane passes span 148 to 168 (FVFSTLVVGSILNFTLMYLLA) and 213 to 233 (VFATVGLAAGLVGTAISNGLI).

Belongs to the RETICULATA family.

It localises to the plastid. The protein resides in the chloroplast membrane. Functionally, may play a role in leaf development. In Arabidopsis thaliana (Mouse-ear cress), this protein is Protein RETICULATA-RELATED 2, chloroplastic.